Consider the following 337-residue polypeptide: UDP-glucose 4-epimerase (337 aa).

NAD(+)-binding positions include 11 to 12 (YI), 31 to 36 (DNLSNA), 58 to 59 (DL), 80 to 84 (FAGLK), N99, S124, Y149, K153, and F178. Substrate-binding residues include S124 and Y149. Y149 functions as the Proton acceptor in the catalytic mechanism. Residues N179, 199–200 (NL), 216–218 (GIF), R231, and 292–295 (RDGD) contribute to the substrate site.

The protein belongs to the NAD(P)-dependent epimerase/dehydratase family. As to quaternary structure, homodimer. It depends on NAD(+) as a cofactor.

It carries out the reaction UDP-alpha-D-glucose = UDP-alpha-D-galactose. The protein operates within carbohydrate metabolism; galactose metabolism. In terms of biological role, involved in the metabolism of galactose. Catalyzes the conversion of UDP-galactose (UDP-Gal) to UDP-glucose (UDP-Glc) through a mechanism involving the transient reduction of NAD. The polypeptide is UDP-glucose 4-epimerase (galE) (Erwinia amylovora (Fire blight bacteria)).